The chain runs to 447 residues: Probable 7-dehydrocholesterol reductase (447 aa).

A run of 8 helical transmembrane segments spans residues 24-44 (LTTA…YLIT), 71-91 (IPSF…FQLI), 102-124 (FVPH…LVYY), 133-153 (IITH…PTII), 157-177 (WGSI…LAYF), 244-264 (YVSN…VDFF), 281-301 (FGWM…TLQA), and 309-329 (IDLS…GYII). NADP(+) is bound by residues K337, R341, I367, W372, and 379–380 (NY). A helical membrane pass occupies residues 393 to 413 (ACGFSHFIPYFYCVYMTILLV). Residues D419, 423-427 (CSRKY), and Y434 each bind NADP(+).

Belongs to the ERG4/ERG24 family.

The protein resides in the membrane. The catalysed reaction is cholesterol + NADP(+) = 7-dehydrocholesterol + NADPH + H(+). The protein operates within steroid biosynthesis; cholesterol biosynthesis. Its function is as follows. Catalyzes the last step of the cholesterol synthesis pathway, which transforms cholesta-5,7-dien-3beta-ol (7-dehydrocholesterol,7-DHC) into cholesterol by reducing the C7-C8 double bond of its sterol core. The protein is Probable 7-dehydrocholesterol reductase (DHCR7) of Acanthamoeba polyphaga (Amoeba).